A 242-amino-acid polypeptide reads, in one-letter code: Ribosomal RNA large subunit methyltransferase E (242 aa).

The S-adenosyl-L-methionine site is built by Gly88, Trp90, Asp111, Asp127, and Asp151. The active-site Proton acceptor is the Lys191.

This sequence belongs to the class I-like SAM-binding methyltransferase superfamily. RNA methyltransferase RlmE family.

It is found in the cytoplasm. It carries out the reaction uridine(2552) in 23S rRNA + S-adenosyl-L-methionine = 2'-O-methyluridine(2552) in 23S rRNA + S-adenosyl-L-homocysteine + H(+). Its function is as follows. Specifically methylates the uridine in position 2552 of 23S rRNA at the 2'-O position of the ribose in the fully assembled 50S ribosomal subunit. The protein is Ribosomal RNA large subunit methyltransferase E of Bartonella tribocorum (strain CIP 105476 / IBS 506).